Here is a 445-residue protein sequence, read N- to C-terminus: GTPase Der (445 aa).

2 consecutive EngA-type G domains span residues 2–166 (FRVA…PEYE) and 182–355 (IKVA…NQAW). GTP contacts are provided by residues 8 to 15 (GIPNVGKS), 55 to 59 (DTGGY), 118 to 121 (NKID), 188 to 195 (GKPNAGKS), 235 to 239 (DTAGM), and 300 to 303 (NKID). The KH-like domain occupies 356–440 (KRVGTGQLNR…PIKLIFRGKE (85 aa)).

This sequence belongs to the TRAFAC class TrmE-Era-EngA-EngB-Septin-like GTPase superfamily. EngA (Der) GTPase family. As to quaternary structure, associates with the 50S ribosomal subunit.

In terms of biological role, GTPase that plays an essential role in the late steps of ribosome biogenesis. This is GTPase Der from Sulfurihydrogenibium sp. (strain YO3AOP1).